We begin with the raw amino-acid sequence, 2472 residues long: Spectrin alpha chain, non-erythrocytic 1 (2472 aa).

Residue Met1 is modified to N-acetylmethionine. 9 Spectrin repeats span residues 45–146 (RFQF…IKLL), 150–251 (KLVQ…QGKL), 256–358 (EVQR…ARLD), 361–465 (YRLQ…QYEQ), 468–570 (DLQL…AQLA), 574–676 (HLQQ…KLRE), 679–781 (QQQQ…QKLA), 785–888 (RLQQ…DLED), and 891–961 (QAQQ…QQVA). Position 587 is a phosphoserine (Ser587). At Lys637 the chain carries N6-acetyllysine. At Lys803 the chain carries N6-acetyllysine. Residues Ser924, Ser982, Ser999, Ser1029, Ser1031, and Ser1041 each carry the phosphoserine modification. Residues 967–1026 (TGKELVLALYDYQEKSPREVTMKKGDILTLLNSTNKDWWKVEVNDRQGFVPAAYVKKLDP) form the SH3 domain. One copy of the Spectrin 10 repeat lies at 1096–1166 (LFREANELQQ…LESEGLMAEE (71 aa)). Tyr1176 carries the post-translational modification Phosphotyrosine. Residues Ser1190, Ser1207, Ser1217, Ser1291, Ser1306, Ser1323, and Ser1338 each carry the phosphoserine modification. Residues 1233–1336 (HEVQRFHRDA…RADQRKAKLG (104 aa)) form a Spectrin 11 repeat. 2 Spectrin repeats span residues 1339-1441 (HDLQ…RMML) and 1446-1549 (ELQL…KLGE). Lys1519 is modified (N6-acetyllysine). A phosphoserine mark is found at Ser1550, Ser1557, Ser1578, Ser1615, and Ser1647. Spectrin repeat units follow at residues 1552–1656 (TLQQ…KLKE), 1659–1762 (KQQN…KLSE), 1764–1868 (HRLH…RLEE), 1871–1974 (EYQQ…KLDE), 1978–2081 (FLQF…KLLE), 2092–2194 (LFLT…LELQ), and 2206–2310 (LRQE…NLEQ). Thr2020 bears the Phosphothreonine mark. Lys2052 carries the N6-acetyllysine modification. At Thr2066 the chain carries Phosphothreonine. EF-hand domains lie at 2323–2358 (EALK…LGYD), 2366–2401 (EPDP…RETE), and 2404–2439 (KSSE…EQAD). Asp2336, Asp2338, Ser2340, Arg2342, Glu2347, Asp2379, Asn2381, Asp2383, His2385, and Glu2390 together coordinate Ca(2+). Lys2421 bears the N6-acetyllysine mark.

It belongs to the spectrin family. In terms of assembly, like erythrocyte spectrin, the spectrin-like proteins are capable of forming dimers which can further associate to tetramers. Interacts (via C-terminal spectrin repeats) with TRPC4. Interacts with CALM and EMD. Interacts with isoform 1 of ACP1. Identified in a complex with ACTN4, CASK, IQGAP1, MAGI2, NPHS1 and SPTBN1. Interacts with SHANK3 (via ANK repeats). Interacts with CLN3; this interaction regulates the fodrin localization at the plasma membrane. Phosphorylation of Tyr-1176 decreases sensitivity to cleavage by calpain in vitro. As to expression, expressed in the foot process layer of podocytes in the kidney glomerulus and in tubules (at protein level).

It is found in the cytoplasm. The protein resides in the cytoskeleton. Its subcellular location is the cell cortex. Its function is as follows. Fodrin, which seems to be involved in secretion, interacts with calmodulin in a calcium-dependent manner and is thus candidate for the calcium-dependent movement of the cytoskeleton at the membrane. The chain is Spectrin alpha chain, non-erythrocytic 1 (Sptan1) from Rattus norvegicus (Rat).